Consider the following 387-residue polypeptide: Chaperone protein DnaJ (387 aa).

The region spanning D6–G70 is the J domain. Residues G130–T212 form a CR-type zinc finger. 8 residues coordinate Zn(2+): C143, C146, C160, C163, C186, C189, C200, and C203. CXXCXGXG motif repeat units follow at residues C143–G150, C160–G167, C186–G193, and C200–G207. Positions C143–T162 are disordered.

It belongs to the DnaJ family. Homodimer. Zn(2+) is required as a cofactor.

The protein resides in the cytoplasm. Participates actively in the response to hyperosmotic and heat shock by preventing the aggregation of stress-denatured proteins and by disaggregating proteins, also in an autonomous, DnaK-independent fashion. Unfolded proteins bind initially to DnaJ; upon interaction with the DnaJ-bound protein, DnaK hydrolyzes its bound ATP, resulting in the formation of a stable complex. GrpE releases ADP from DnaK; ATP binding to DnaK triggers the release of the substrate protein, thus completing the reaction cycle. Several rounds of ATP-dependent interactions between DnaJ, DnaK and GrpE are required for fully efficient folding. Also involved, together with DnaK and GrpE, in the DNA replication of plasmids through activation of initiation proteins. This Methanosarcina thermophila protein is Chaperone protein DnaJ.